The sequence spans 191 residues: Small ribosomal subunit protein uS9c (191 aa).

The tract at residues 166–191 (TQDSRVKERRKYGLKKARKASQYHKR) is disordered. The span at 172–191 (KERRKYGLKKARKASQYHKR) shows a compositional bias: basic residues.

This sequence belongs to the universal ribosomal protein uS9 family.

The protein resides in the plastid. Its subcellular location is the chloroplast. The sequence is that of Small ribosomal subunit protein uS9c (rps9) from Chlamydomonas reinhardtii (Chlamydomonas smithii).